An 87-amino-acid chain; its full sequence is Putative regulatory protein GWCH70_1057 (87 aa).

It belongs to the RemA family.

In Geobacillus sp. (strain WCH70), this protein is Putative regulatory protein GWCH70_1057.